The sequence spans 106 residues: Small ribosomal subunit protein uS10 (106 aa).

This sequence belongs to the universal ribosomal protein uS10 family. In terms of assembly, part of the 30S ribosomal subunit.

Functionally, involved in the binding of tRNA to the ribosomes. The polypeptide is Small ribosomal subunit protein uS10 (Mesomycoplasma hyopneumoniae (strain 232) (Mycoplasma hyopneumoniae)).